The primary structure comprises 478 residues: Vitronectin (478 aa).

A signal peptide spans 1–19 (MAPLRPFFILALVAWVSLA). The SMB domain occupies 20-63 (DQESCKGRCTQGFMASKKCQCDELCTYYQSCCADYMEQCKPQVT). Cystine bridges form between Cys-24–Cys-28, Cys-24–Cys-40, Cys-28–Cys-58, Cys-38–Cys-40, Cys-38–Cys-51, Cys-44–Cys-50, and Cys-51–Cys-58. The Cell attachment site signature appears at 64–66 (RGD). Thr-69 carries the phosphothreonine modification. Sulfotyrosine is present on residues Tyr-75, Tyr-78, and Tyr-80. Residues 82 to 153 (EEPKNNTNTG…QGTPEFPEEE (72 aa)) form a disordered region. Residue Asn-86 is glycosylated (N-linked (GlcNAc...) asparagine). A compositionally biased stretch (polar residues) spans 86–99 (NNTNTGVQPENTSP). The span at 131-141 (EQQEEILRPDT) shows a compositional bias: basic and acidic residues. Hemopexin repeat units lie at residues 157–201 (GKPF…VWGI), 202–249 (EGPI…FSGI), and 250–304 (PDNV…FEHF). 2 N-linked (GlcNAc...) asparagine glycosylation sites follow: Asn-168 and Asn-241. Sulfotyrosine occurs at positions 278 and 281. Cys-292 and Cys-431 are joined by a disulfide. Phosphoserine occurs at positions 311 and 362. The interval 359–395 (LSHSAQAKKQKSKRRSRKRYRSRRGRGHRRSQSSNSR) is disordered. Residues 364-389 (QAKKQKSKRRSRKRYRSRRGRGHRRS) are compositionally biased toward basic residues. Positions 366–399 (KKQKSKRRSRKRYRSRRGRGHRRSQSSNSRRSSR) are heparin-binding. Ser-398 carries the post-translational modification Phosphoserine; by PKA. A sulfotyrosine mark is found at Tyr-416, Tyr-419, and Tyr-421. A Hemopexin 4 repeat occupies 420–473 (DYDMDWLVPATCEPIQSVYFFSGDKYYRVNLRTRRVDSVNPPYPRSIAQYWLGC).

In terms of assembly, interacts with SERPINE1/PAI1, insulin and C1QBP. In terms of processing, sulfated on tyrosine residues. Post-translationally, N- and O-glycosylated. It has been suggested that the active SMB domain may be permitted considerable disulfide bond heterogeneity or variability, thus two alternate disulfide patterns based on 3D structures are described with 1 disulfide bond conserved in both. As to expression, plasma.

Its subcellular location is the secreted. It localises to the extracellular space. Vitronectin is a cell adhesion and spreading factor found in serum and tissues. Vitronectin interact with glycosaminoglycans and proteoglycans. Is recognized by certain members of the integrin family and serves as a cell-to-substrate adhesion molecule. Inhibitor of the membrane-damaging effect of the terminal cytolytic complement pathway. The polypeptide is Vitronectin (Vtn) (Mus musculus (Mouse)).